Here is a 172-residue protein sequence, read N- to C-terminus: Female-specific lacrimal gland protein (172 aa).

The signal sequence occupies residues 1 to 16 (MVKFLLLALALGVSCA). 2 cysteine pairs are disulfide-bonded: C60–C64 and C79–C170.

Belongs to the calycin superfamily. Lipocalin family. Expressed in the lacrimal gland from where it is secreted into tears (at protein level).

The protein resides in the secreted. The polypeptide is Female-specific lacrimal gland protein (Mesocricetus auratus (Golden hamster)).